A 510-amino-acid chain; its full sequence is Xylose import ATP-binding protein XylG (510 aa).

ABC transporter domains are found at residues 5–242 (LEMK…VGRE) and 259–505 (LRVE…LRSE). Residue 37–44 (GENGSGKS) coordinates ATP.

The protein belongs to the ABC transporter superfamily. Xylose importer (TC 3.A.1.2.4) family. As to quaternary structure, the complex is composed of two ATP-binding proteins (XylG), two transmembrane proteins (XylH) and a solute-binding protein (XylF).

The protein localises to the cell inner membrane. It carries out the reaction D-xylose(out) + ATP + H2O = D-xylose(in) + ADP + phosphate + H(+). Its function is as follows. Part of the ABC transporter complex XylFGH involved in xylose import. Responsible for energy coupling to the transport system. The chain is Xylose import ATP-binding protein XylG from Yersinia pestis.